A 312-amino-acid chain; its full sequence is MSPESKKITAHGSTSMPLSRTSKPQKFTIPLTVGAIFSVIGFLQRFFLASGKGDVQSLYTLSTMFILGAGPTYAGADYFICGRLFSFVPSAAPMSPIRVVRTFITFDVLAEVCVWTGAGLLAGAHTDTAARYKIGLNLIRAAMITQAFLFTSFVAILASFHVRVCALRAEWSVTSNGGTGRRFMMVVHSLYASSIFIIIRSAYHIAGHSFRTNEQPFLICEASLMLLNTAMFNVFHPGHILPIDSRVYVGIDGQERANETIEGAFTDSRPLLQKILDPLDVKGLFSRDKKRWHDPTAELEMDINSTLYAALT.

The segment at 1–21 (MSPESKKITAHGSTSMPLSRT) is disordered. Polar residues predominate over residues 11-21 (HGSTSMPLSRT). Helical transmembrane passes span 29-49 (IPLT…FFLA), 61-81 (LSTM…YFIC), 103-123 (FITF…LLAG), 142-162 (AMIT…SFHV), 183-203 (FMMV…RSAY), and 223-243 (SLML…ILPI). Residues Asn-258 and Asn-304 are each glycosylated (N-linked (GlcNAc...) asparagine).

It belongs to the lipid-translocating exporter (LTE) (TC 9.A.26.1) family.

The protein localises to the membrane. It functions in the pathway siderophore biosynthesis. In terms of biological role, lipid-translocating exporter-like protein; part of the gene cluster that mediates the biosynthesis of hydroxamate-containing siderophores that play a critical role in virulence via intracellular iron acquisition during macrophage infection. The sequence is that of Lipid-translocating exporter-like protein RTA1 from Ajellomyces capsulatus (Darling's disease fungus).